We begin with the raw amino-acid sequence, 369 residues long: Cytoplasmic tRNA 2-thiolation protein 1 (369 aa).

The protein belongs to the TtcA family. CTU1/NCS6/ATPBD3 subfamily.

It is found in the cytoplasm. The protein operates within tRNA modification; 5-methoxycarbonylmethyl-2-thiouridine-tRNA biosynthesis. In terms of biological role, plays a central role in 2-thiolation of mcm(5)S(2)U at tRNA wobble positions of tRNA(Lys), tRNA(Glu) and tRNA(Gln). Directly binds tRNAs and probably acts by catalyzing adenylation of tRNAs, an intermediate required for 2-thiolation. It is unclear whether it acts as a sulfurtransferase that transfers sulfur from thiocarboxylated URM1 onto the uridine of tRNAs at wobble position. Prior mcm(5) tRNA modification by the elongator complex is required for 2-thiolation. May also be involved in protein urmylation. This Meyerozyma guilliermondii (strain ATCC 6260 / CBS 566 / DSM 6381 / JCM 1539 / NBRC 10279 / NRRL Y-324) (Yeast) protein is Cytoplasmic tRNA 2-thiolation protein 1.